Consider the following 314-residue polypeptide: Olfactory receptor 5P76 (314 aa).

The Extracellular portion of the chain corresponds to 1-28 (MAFLEDGNHTAVTGFILLGLTDDPVLRV). N8 is a glycosylation site (N-linked (GlcNAc...) asparagine). Residues 29–49 (VLFVIILCIYLVTVSGNLSTI) form a helical membrane-spanning segment. The Cytoplasmic segment spans residues 50–57 (LLIRVSSQ). Residues 58–78 (LHHPMYFFLSHLASADIGYSS) form a helical membrane-spanning segment. At 79–102 (SVTPNMLVNFLVERNTISYLGCGI) the chain is on the extracellular side. An intrachain disulfide couples C100 to C192. Residues 103-123 (QLGSAVFFGTVECFLLAAMAY) form a helical membrane-spanning segment. The Cytoplasmic segment spans residues 124–136 (DRFIAICSPLLYS). A helical membrane pass occupies residues 137–157 (NKMSTQVCVQLLVGSYIGGFL). Over 158-199 (NASSFTLSFFSLVFCGPNRVNHFFCDFAPLVKLSCSDVSVPA) the chain is Extracellular. A helical membrane pass occupies residues 200–220 (VVPSFTAGSIIIVTIFVIAVS). Over 221-240 (YIYILITILKMRSTEGRQKA) the chain is Cytoplasmic. Residues 241–261 (FSTCTSHLTAVTLFYGTITFI) traverse the membrane as a helical segment. At 262–274 (YVMPKSSYSTDQN) the chain is on the extracellular side. The helical transmembrane segment at 275 to 295 (KVVSVFYMVVVPMLNPLIYSL) threads the bilayer. Residues 296 to 314 (RNKEIKGALKRQLAKNTFS) lie on the Cytoplasmic side of the membrane.

Belongs to the G-protein coupled receptor 1 family.

It is found in the cell membrane. Functionally, potential odorant receptor. The chain is Olfactory receptor 5P76 from Mus musculus (Mouse).